The chain runs to 236 residues: UPF0502 protein Bamb_4889 (236 aa).

The protein belongs to the UPF0502 family.

The chain is UPF0502 protein Bamb_4889 from Burkholderia ambifaria (strain ATCC BAA-244 / DSM 16087 / CCUG 44356 / LMG 19182 / AMMD) (Burkholderia cepacia (strain AMMD)).